The primary structure comprises 90 residues: Small ribosomal subunit protein uS15 (90 aa).

Belongs to the universal ribosomal protein uS15 family. As to quaternary structure, part of the 30S ribosomal subunit. Forms a bridge to the 50S subunit in the 70S ribosome, contacting the 23S rRNA.

In terms of biological role, one of the primary rRNA binding proteins, it binds directly to 16S rRNA where it helps nucleate assembly of the platform of the 30S subunit by binding and bridging several RNA helices of the 16S rRNA. Forms an intersubunit bridge (bridge B4) with the 23S rRNA of the 50S subunit in the ribosome. The protein is Small ribosomal subunit protein uS15 of Wolbachia pipientis wMel.